The chain runs to 349 residues: Probable FBD-associated F-box protein At5g38565 (349 aa).

One can recognise an F-box domain in the interval 1 to 47; sequence MDIFNGLPDDVLVKILSFVPTKVAVSTSILSKRWEFLWMWLPRLDFG. The 49-residue stretch at 263-311 folds into the FBD domain; sequence CWNQPISVPECLLESLQIFNLSHYFGKQQDLDFVVYILKNACHLKTATI.

The polypeptide is Probable FBD-associated F-box protein At5g38565 (Arabidopsis thaliana (Mouse-ear cress)).